We begin with the raw amino-acid sequence, 412 residues long: Argininosuccinate synthase (412 aa).

ATP-binding positions include 20-28 and A48; that span reads AYSGGLDTS. The L-citrulline site is built by Y100 and S105. An ATP-binding site is contributed by G130. L-aspartate is bound by residues T132, N136, and D137. N136 is a binding site for L-citrulline. L-citrulline is bound by residues R140, S189, S198, E274, and Y286.

The protein belongs to the argininosuccinate synthase family. Type 1 subfamily. In terms of assembly, homotetramer.

It is found in the cytoplasm. It carries out the reaction L-citrulline + L-aspartate + ATP = 2-(N(omega)-L-arginino)succinate + AMP + diphosphate + H(+). The protein operates within amino-acid biosynthesis; L-arginine biosynthesis; L-arginine from L-ornithine and carbamoyl phosphate: step 2/3. The sequence is that of Argininosuccinate synthase from Shewanella halifaxensis (strain HAW-EB4).